The sequence spans 374 residues: MHCESPIVRRKSRQIMVGNVPVGGGAPISVQSMTNTETTDVAATVEQIRRIQTAGADIVRVSVPTMEAAEAFGLIRKQVNIPLVADIHFDYRIALRVADLGVDCLRINPGNIGREKRIKAVVDKARDLNIPIRIGVNAGSLEKDLQKKYGEPTPDALVESALRHVEILDGLNFYNFKVSVKASDIFMAVAAYRKLAALIEQPLHLGITEAGGLRAGTVKSAIGLGALLMDGIGDTIRVSLAADPVEEIKVGWDMLRSLKIRSKGVNFIACPSCSRQNFDVIKTMNDLELRVEDITVPLDVAVIGCVVNGPGEAKEADLGLAGGTPSNLIYIDGEPSQKLTNENLVDNLERLIRAKAAQKQAQLEADAKNIIARA.

The [4Fe-4S] cluster site is built by Cys270, Cys273, Cys305, and Glu312.

This sequence belongs to the IspG family. [4Fe-4S] cluster serves as cofactor.

The catalysed reaction is (2E)-4-hydroxy-3-methylbut-2-enyl diphosphate + oxidized [flavodoxin] + H2O + 2 H(+) = 2-C-methyl-D-erythritol 2,4-cyclic diphosphate + reduced [flavodoxin]. It participates in isoprenoid biosynthesis; isopentenyl diphosphate biosynthesis via DXP pathway; isopentenyl diphosphate from 1-deoxy-D-xylulose 5-phosphate: step 5/6. Functionally, converts 2C-methyl-D-erythritol 2,4-cyclodiphosphate (ME-2,4cPP) into 1-hydroxy-2-methyl-2-(E)-butenyl 4-diphosphate. This chain is 4-hydroxy-3-methylbut-2-en-1-yl diphosphate synthase (flavodoxin), found in Cellvibrio japonicus (strain Ueda107) (Pseudomonas fluorescens subsp. cellulosa).